The chain runs to 507 residues: Glucose transporter type 3 (507 aa).

Residues 1-26 form a disordered region; that stretch reads MRKGGIQDAEPVEPPQSSRKSGTWFA. Over 1–53 the chain is Cytoplasmic; sequence MRKGGIQDAEPVEPPQSSRKSGTWFAKRPSEMPERHVERAPVRQKINNVGLYK. Residues 54-74 traverse the membrane as a helical segment; it reads ATLYSNIGSFFFGIAVGWSGT. The Extracellular portion of the chain corresponds to 75–95; sequence AERSVMEQHSYSFQPTELQWS. The chain crosses the membrane as a helical span at residues 96-116; it reads GVCILLTLGAALWCLPMGLMV. At 117-124 the chain is on the cytoplasmic side; the sequence is RLLGCRRT. A helical transmembrane segment spans residues 125–145; it reads ILIQLLPNFLGWFLTVFARSV. At 146 to 152 the chain is on the extracellular side; it reads PMLYAGR. A helical membrane pass occupies residues 153 to 173; sequence FFLGMCGGAHCVVVPIYNAEI. At 174-183 the chain is on the cytoplasmic side; the sequence is STTKKRGAMG. Residues 184 to 204 form a helical membrane-spanning segment; that stretch reads VVFEGACICGVIYSFAMSLFL. Residues 205–207 are Extracellular-facing; sequence ELR. The helical transmembrane segment at 208–228 threads the bilayer; that stretch reads IINFVNLGLLALGPLQILMPE. Residues 229–293 lie on the Cytoplasmic side of the membrane; that stretch reads SPAYYVDHGN…YKKVRRSLAR (65 aa). Residues 294 to 314 traverse the membrane as a helical segment; that stretch reads SLAIALLQKLCGALIFIFYGL. Residues 315 to 324 lie on the Extracellular side of the membrane; it reads NMLDCLRIRR. Residues 325–345 traverse the membrane as a helical segment; the sequence is EFGLILCLGLILGFLACFFLV. The Cytoplasmic segment spans residues 346 to 351; the sequence is DRLGRR. The helical transmembrane segment at 352–372 threads the bilayer; it reads PLLIFSSAGIVFVSIYLGLHF. The Extracellular portion of the chain corresponds to 373 to 374; the sequence is KV. A helical membrane pass occupies residues 375–395; it reads WMTMGLTVMSWIALFCIAIFV. Residues 396–420 lie on the Cytoplasmic side of the membrane; sequence GCYTAGVGSLTWVLNAELLVRPMRP. Residues 421–441 traverse the membrane as a helical segment; it reads LGCSIVCAFNWLTAFFVICWF. Topologically, residues 442–450 are extracellular; sequence GSHGVKCQP. A helical membrane pass occupies residues 451 to 471; the sequence is YLFLLFAIIASLILLFSLIYI. Over 472–507 the chain is Cytoplasmic; it reads PETKKLSSAKIQQRLGGLINRPAVITFTSSSDSSNA.

The protein belongs to the major facilitator superfamily. Sugar transporter (TC 2.A.1.1) family. Glucose transporter subfamily.

The protein localises to the cell membrane. The protein resides in the perikaryon. It is found in the cell projection. Its function is as follows. Facilitative glucose transporter that can also mediate the uptake of various other monosaccharides across the cell membrane. The polypeptide is Glucose transporter type 3 (Glut3) (Drosophila melanogaster (Fruit fly)).